We begin with the raw amino-acid sequence, 321 residues long: D-alanine--D-alanine ligase (321 aa).

One can recognise an ATP-grasp domain in the interval 121 to 315 (RIWFLTNNIN…FTNLIEEIIK (195 aa)). Position 147–199 (147–199 (PMKRPYVIKPLTQGSSIGVEVIFAEDDFNFADYDFPYGDQVIIEQYIKGRELQ)) interacts with ATP. Mg(2+)-binding residues include E268, E282, and N284.

Belongs to the D-alanine--D-alanine ligase family. It depends on Mg(2+) as a cofactor. Mn(2+) serves as cofactor.

It localises to the cytoplasm. It carries out the reaction 2 D-alanine + ATP = D-alanyl-D-alanine + ADP + phosphate + H(+). It functions in the pathway cell wall biogenesis; peptidoglycan biosynthesis. Cell wall formation. The chain is D-alanine--D-alanine ligase from Rickettsia africae (strain ESF-5).